Consider the following 511-residue polypeptide: Phosphoenolpyruvate carboxylase (511 aa).

It belongs to the PEPCase type 2 family. Homotetramer. The cofactor is Mg(2+).

The catalysed reaction is oxaloacetate + phosphate = phosphoenolpyruvate + hydrogencarbonate. Catalyzes the irreversible beta-carboxylation of phosphoenolpyruvate (PEP) to form oxaloacetate (OAA), a four-carbon dicarboxylic acid source for the tricarboxylic acid cycle. This chain is Phosphoenolpyruvate carboxylase, found in Saccharolobus islandicus (strain M.16.27) (Sulfolobus islandicus).